A 280-amino-acid polypeptide reads, in one-letter code: Shikimate dehydrogenase (NADP(+)) (280 aa).

Shikimate is bound by residues 15-17 and Thr-62; that span reads SLS. The Proton acceptor role is filled by Lys-66. Residues Asn-88 and Asp-104 each coordinate shikimate. Residues 128–132, 151–156, and Ile-222 each bind NADP(+); these read GAGGA and NRTEGR. Tyr-224 contributes to the shikimate binding site. Gly-245 serves as a coordination point for NADP(+).

This sequence belongs to the shikimate dehydrogenase family. Homodimer.

It catalyses the reaction shikimate + NADP(+) = 3-dehydroshikimate + NADPH + H(+). It participates in metabolic intermediate biosynthesis; chorismate biosynthesis; chorismate from D-erythrose 4-phosphate and phosphoenolpyruvate: step 4/7. Its function is as follows. Involved in the biosynthesis of the chorismate, which leads to the biosynthesis of aromatic amino acids. Catalyzes the reversible NADPH linked reduction of 3-dehydroshikimate (DHSA) to yield shikimate (SA). This is Shikimate dehydrogenase (NADP(+)) from Methanosarcina barkeri (strain Fusaro / DSM 804).